The sequence spans 255 residues: Probable transcriptional regulatory protein CMS0715 (255 aa).

The protein belongs to the TACO1 family.

It is found in the cytoplasm. The protein is Probable transcriptional regulatory protein CMS0715 of Clavibacter sepedonicus (Clavibacter michiganensis subsp. sepedonicus).